Here is a 101-residue protein sequence, read N- to C-terminus: Small ribosomal subunit protein uS14 (101 aa).

This sequence belongs to the universal ribosomal protein uS14 family. As to quaternary structure, part of the 30S ribosomal subunit. Contacts proteins S3 and S10.

In terms of biological role, binds 16S rRNA, required for the assembly of 30S particles and may also be responsible for determining the conformation of the 16S rRNA at the A site. The chain is Small ribosomal subunit protein uS14 from Marinobacter nauticus (strain ATCC 700491 / DSM 11845 / VT8) (Marinobacter aquaeolei).